The following is a 423-amino-acid chain: Tubulin beta-2 chain (423 aa).

GTP contacts are provided by Glu-44, Ser-113, Gly-117, Thr-118, Gly-119, Asn-179, and Asn-201. Glu-44 contacts Mg(2+). The interval 394–423 (VSEYQQYQDATAEEEGEYDEDEDDEGGDYA) is disordered. Over residues 404–423 (TAEEEGEYDEDEDDEGGDYA) the composition is skewed to acidic residues.

It belongs to the tubulin family. As to quaternary structure, dimer of alpha and beta chains. A typical microtubule is a hollow water-filled tube with an outer diameter of 25 nm and an inner diameter of 15 nM. Alpha-beta heterodimers associate head-to-tail to form protofilaments running lengthwise along the microtubule wall with the beta-tubulin subunit facing the microtubule plus end conferring a structural polarity. Microtubules usually have 13 protofilaments but different protofilament numbers can be found in some organisms and specialized cells. The cofactor is Mg(2+).

Its subcellular location is the cytoplasm. It is found in the cytoskeleton. Functionally, tubulin is the major constituent of microtubules, a cylinder consisting of laterally associated linear protofilaments composed of alpha- and beta-tubulin heterodimers. Microtubules grow by the addition of GTP-tubulin dimers to the microtubule end, where a stabilizing cap forms. Below the cap, tubulin dimers are in GDP-bound state, owing to GTPase activity of alpha-tubulin. This chain is Tubulin beta-2 chain (TUBB2), found in Oomycete-like sp. (strain MacKay2000).